A 245-amino-acid polypeptide reads, in one-letter code: Probable phosphatase YcdX (245 aa).

Residues H7, H9, H15, H40, E73, H101, H131, D192, and H194 each contribute to the Zn(2+) site.

It belongs to the PHP family. In terms of assembly, homotrimer. Zn(2+) serves as cofactor.

This Salmonella arizonae (strain ATCC BAA-731 / CDC346-86 / RSK2980) protein is Probable phosphatase YcdX.